We begin with the raw amino-acid sequence, 55 residues long: Large ribosomal subunit protein bL32c (55 aa).

It belongs to the bacterial ribosomal protein bL32 family.

The protein resides in the plastid. It localises to the chloroplast. The polypeptide is Large ribosomal subunit protein bL32c (Daucus carota (Wild carrot)).